A 591-amino-acid chain; its full sequence is Probable anion transporter 4, chloroplastic (591 aa).

The segment at 1–38 (MAMGAVLSSRTFASPLSSSGKQHPPQNNKCTCSSPPTR) is disordered. The transit peptide at 1–76 (MAMGAVLSSR…LSARFHQPVV (76 aa)) directs the protein to the chloroplast. The segment covering 8-36 (SSRTFASPLSSSGKQHPPQNNKCTCSSPP) has biased composition (polar residues). The next 11 helical transmembrane spans lie at 184 to 204 (VVLL…NMSI), 220 to 240 (VGLI…LGGI), 249 to 269 (VVLG…PLAA), 271 to 291 (IGLP…GVAM), 313 to 333 (LVYS…PLLI), 336 to 356 (FGWP…FALW), 402 to 422 (VWAL…LLTW), 440 to 460 (LLCV…GWIA), 475 to 495 (KIMQ…LSKV), 531 to 551 (AGVL…FGTA), and 565 to 585 (VFQV…VFST).

This sequence belongs to the major facilitator superfamily. Sodium/anion cotransporter (TC 2.A.1.14) family.

It is found in the plastid. The protein resides in the chloroplast membrane. Functionally, probable anion transporter. In Oryza sativa subsp. japonica (Rice), this protein is Probable anion transporter 4, chloroplastic (PHT4;4).